The primary structure comprises 163 residues: Shikimate kinase (163 aa).

ATP is bound at residue 10 to 15; it reads GVGKSS. S14 lines the Mg(2+) pocket. The substrate site is built by D28, R52, and G75. R116 is a binding site for ATP. R134 is a binding site for substrate. R151 is an ATP binding site.

This sequence belongs to the shikimate kinase family. In terms of assembly, monomer. Requires Mg(2+) as cofactor.

The protein localises to the cytoplasm. It carries out the reaction shikimate + ATP = 3-phosphoshikimate + ADP + H(+). The protein operates within metabolic intermediate biosynthesis; chorismate biosynthesis; chorismate from D-erythrose 4-phosphate and phosphoenolpyruvate: step 5/7. Functionally, catalyzes the specific phosphorylation of the 3-hydroxyl group of shikimic acid using ATP as a cosubstrate. This is Shikimate kinase from Streptococcus thermophilus (strain ATCC BAA-491 / LMD-9).